Consider the following 2596-residue polypeptide: Protein unc-79 homolog (2596 aa).

Residues Ser754 and Ser758 each carry the phosphoserine modification. Disordered stretches follow at residues 907–931 (GPEG…TVPS), 1539–1573 (SQRQ…GFQE), 1594–1632 (VDSP…DSDS), 1648–1679 (EEEE…SVLS), 1695–1832 (KDFS…FKIQ), and 1863–1909 (LGEQ…KQIQ). The segment covering 1594–1606 (VDSPGKPAPREDL) has biased composition (basic and acidic residues). Positions 1662–1679 (GNNAASSPSIPSQPSVLS) are enriched in low complexity. Positions 1704 to 1713 (NHQSASNEDS) are enriched in polar residues. Over residues 1726 to 1735 (ELSKSEELRE) the composition is skewed to basic and acidic residues. The segment covering 1897–1908 (ETSSHSSISKQI) has biased composition (polar residues). 2 helical membrane-spanning segments follow: residues 2184-2204 (LLSF…ELCG) and 2426-2446 (CVLH…WTVY).

The protein belongs to the unc-79 family. NALCN complex consists of NALCN and auxiliary subunits, UNC79, UNC80 and NACL1. These auxiliary subunits are essential for the NALCN channel function. UNC80 bridges NALCN to UNC79. Interacts with NALCN. Interacts with UNC80.

It is found in the cell membrane. In terms of biological role, auxiliary subunit of the NALCN sodium channel complex. The NALCN sodium channel complex is a voltage-gated ion channel responsible for the resting Na(+) permeability that controls neuronal excitability. Activated by neuropeptides substance P, neurotensin, and extracellular calcium that regulates neuronal excitability by controlling the sizes of NALCN-dependent sodium-leak current. The chain is Protein unc-79 homolog (Unc79) from Mus musculus (Mouse).